The primary structure comprises 567 residues: Septation ring formation regulator EzrA (567 aa).

The Extracellular portion of the chain corresponds to 1–2 (MG). A helical transmembrane segment spans residues 3–21 (MAWIVLLLGAGAIIYNHVY). Residues 22–567 (RKRMYREIDR…LWQEDNSREQ (546 aa)) lie on the Cytoplasmic side of the membrane. Coiled coils occupy residues 98–159 (YRQA…AYRY) and 251–497 (HMER…IEQA).

This sequence belongs to the EzrA family.

It localises to the cell membrane. In terms of biological role, negative regulator of FtsZ ring formation; modulates the frequency and position of FtsZ ring formation. Inhibits FtsZ ring formation at polar sites. Interacts either with FtsZ or with one of its binding partners to promote depolymerization. This Geobacillus kaustophilus (strain HTA426) protein is Septation ring formation regulator EzrA.